The following is a 428-amino-acid chain: GTPase Obg (428 aa).

In terms of domain architecture, Obg spans 1 to 158 (MFVDQVKIYV…RDVILELKVL (158 aa)). The 171-residue stretch at 159–329 (ADVGLVGFPS…LLFEVANLIE (171 aa)) folds into the OBG-type G domain. Residues 165–172 (GFPSVGKS), 190–194 (FTTIV), 212–215 (DLPG), 282–285 (NKMD), and 310–312 (SAV) each bind GTP. Mg(2+)-binding residues include serine 172 and threonine 192. One can recognise an OCT domain in the interval 350-428 (KFETEGVKFD…ILEYEFEFID (79 aa)).

Belongs to the TRAFAC class OBG-HflX-like GTPase superfamily. OBG GTPase family. As to quaternary structure, monomer. Requires Mg(2+) as cofactor.

It localises to the cytoplasm. Functionally, an essential GTPase which binds GTP, GDP and possibly (p)ppGpp with moderate affinity, with high nucleotide exchange rates and a fairly low GTP hydrolysis rate. Plays a role in control of the cell cycle, stress response, ribosome biogenesis and in those bacteria that undergo differentiation, in morphogenesis control. The chain is GTPase Obg from Bacillus thuringiensis (strain Al Hakam).